The primary structure comprises 224 residues: Dickkopf-related protein 4 (224 aa).

The first 18 residues, 1–18 (MVAAVLLGLSWLCSPLGA), serve as a signal peptide directing secretion. The segment at 41–90 (CLSDTDCNTRKFCLQPRDEKPFCATCRGLRRRCQRDAMCCPGTLCVNDVC) is DKK-type Cys-1. Residues 109–139 (GTHAEGTTGHPVQENQPKRKPSIKKSQGRKG) are disordered. A compositionally biased stretch (basic residues) spans 126–136 (KRKPSIKKSQG). 5 cysteine pairs are disulfide-bonded: Cys-145–Cys-157, Cys-151–Cys-166, Cys-156–Cys-194, Cys-176–Cys-202, and Cys-196–Cys-218. Residues 145–218 (CLRTFDCGPG…NRQHARLRVC (74 aa)) form a DKK-type Cys-2 region.

Belongs to the dickkopf family. In terms of assembly, interacts with LRP5 and LRP6. Appears to be not glycosylated. Post-translationally, can be proteolytically processed by a furin-like protease. In terms of tissue distribution, expressed in cerebellum, T-cells, esophagus and lung.

It localises to the secreted. Antagonizes canonical Wnt signaling by inhibiting LRP5/6 interaction with Wnt and by forming a ternary complex with the transmembrane protein KREMEN that promotes internalization of LRP5/6. DKKs play an important role in vertebrate development, where they locally inhibit Wnt regulated processes such as antero-posterior axial patterning, limb development, somitogenesis and eye formation. In the adult, Dkks are implicated in bone formation and bone disease, cancer and Alzheimer disease. The chain is Dickkopf-related protein 4 (DKK4) from Homo sapiens (Human).